A 936-amino-acid chain; its full sequence is ATP-dependent RNA helicase dbp10 (936 aa).

The interval 1–48 (MPSRAASPALSENEFDITGALFQNDSDSDAETQKPTKRKKVPAAPNVN) is disordered. The Q motif motif lies at 91 to 119 (GGFQAMGLNANLLKAIARKGFSVPTPIQR). Residues 122–294 (IPVIMEDQDV…RAGLQDPTLV (173 aa)) form the Helicase ATP-binding domain. 135 to 142 (ARTGSGKT) contacts ATP. The short motif at 242–245 (DEAD) is the DEAD box element. 4 disordered regions span residues 337–363 (TEAS…EMER), 642–684 (EAKK…PDNM), 701–721 (TTDK…PTTL), and 843–936 (TPGL…SRKK). Positions 341–352 (LRLKEKGPEDSK) are enriched in basic and acidic residues. The Helicase C-terminal domain maps to 360 to 511 (EMERAVNMKE…SDQVNFAEDV (152 aa)). Residues 663 to 675 (AEVDGDAFSDLEG) show a composition bias toward acidic residues. Residues 701–717 (TTDKASKSNSNSKSDST) are compositionally biased toward low complexity. The span at 867 to 895 (EKAPKAADPLRGDYEKMKKKAEAARERAA) shows a compositional bias: basic and acidic residues. Residues 896–906 (SKVGGVTSGGK) show a composition bias toward low complexity. Residues 907-916 (SEIRNTDDIR) are compositionally biased toward basic and acidic residues. A compositionally biased stretch (basic residues) spans 917 to 936 (KARKLKQKRREKNARPSRKK).

This sequence belongs to the DEAD box helicase family. DDX54/DBP10 subfamily.

The protein resides in the nucleus. It is found in the nucleolus. The enzyme catalyses ATP + H2O = ADP + phosphate + H(+). In terms of biological role, ATP-binding RNA helicase involved in the biogenesis of 60S ribosomal subunits and is required for the normal formation of 25S and 5.8S rRNAs. In Emericella nidulans (strain FGSC A4 / ATCC 38163 / CBS 112.46 / NRRL 194 / M139) (Aspergillus nidulans), this protein is ATP-dependent RNA helicase dbp10 (dbp10).